We begin with the raw amino-acid sequence, 245 residues long: Aliphatic sulfonates import ATP-binding protein SsuB 1 (245 aa).

The 219-residue stretch at 9-227 (LDLVGIGHRY…HRGDAQLAAW (219 aa)) folds into the ABC transporter domain. 41–48 (GPSGVGKS) is an ATP binding site.

This sequence belongs to the ABC transporter superfamily. Aliphatic sulfonates importer (TC 3.A.1.17.2) family. In terms of assembly, the complex is composed of two ATP-binding proteins (SsuB), two transmembrane proteins (SsuC) and a solute-binding protein (SsuA).

The protein localises to the cell membrane. The catalysed reaction is ATP + H2O + aliphatic sulfonate-[sulfonate-binding protein]Side 1 = ADP + phosphate + aliphatic sulfonateSide 2 + [sulfonate-binding protein]Side 1.. Its function is as follows. Part of the ABC transporter complex SsuABC involved in aliphatic sulfonates import. Responsible for energy coupling to the transport system. This Rhodococcus jostii (strain RHA1) protein is Aliphatic sulfonates import ATP-binding protein SsuB 1.